Here is a 212-residue protein sequence, read N- to C-terminus: Large ribosomal subunit protein uL4 (212 aa).

Belongs to the universal ribosomal protein uL4 family. Part of the 50S ribosomal subunit.

Its function is as follows. One of the primary rRNA binding proteins, this protein initially binds near the 5'-end of the 23S rRNA. It is important during the early stages of 50S assembly. It makes multiple contacts with different domains of the 23S rRNA in the assembled 50S subunit and ribosome. Forms part of the polypeptide exit tunnel. The sequence is that of Large ribosomal subunit protein uL4 from Caulobacter sp. (strain K31).